Here is a 111-residue protein sequence, read N- to C-terminus: Phosphoribosyl-ATP pyrophosphatase (111 aa).

It belongs to the PRA-PH family.

The protein resides in the cytoplasm. The catalysed reaction is 1-(5-phospho-beta-D-ribosyl)-ATP + H2O = 1-(5-phospho-beta-D-ribosyl)-5'-AMP + diphosphate + H(+). It functions in the pathway amino-acid biosynthesis; L-histidine biosynthesis; L-histidine from 5-phospho-alpha-D-ribose 1-diphosphate: step 2/9. The chain is Phosphoribosyl-ATP pyrophosphatase (hisE) from Pseudomonas aeruginosa (strain ATCC 15692 / DSM 22644 / CIP 104116 / JCM 14847 / LMG 12228 / 1C / PRS 101 / PAO1).